The sequence spans 122 residues: Large ribosomal subunit protein uL14 (122 aa).

This sequence belongs to the universal ribosomal protein uL14 family. In terms of assembly, part of the 50S ribosomal subunit. Forms a cluster with proteins L3 and L19. In the 70S ribosome, L14 and L19 interact and together make contacts with the 16S rRNA in bridges B5 and B8.

Functionally, binds to 23S rRNA. Forms part of two intersubunit bridges in the 70S ribosome. This Cupriavidus metallidurans (strain ATCC 43123 / DSM 2839 / NBRC 102507 / CH34) (Ralstonia metallidurans) protein is Large ribosomal subunit protein uL14.